A 767-amino-acid polypeptide reads, in one-letter code: MAFKGEHRAILIANILIVVAISIFSSGFFPYKSLLPGLATFAETNIGTVAPKVFDRVIFMVIDALRSDFVYSKTSGFSFTQSLIRSGAALPFTAHASSPTVTMPRLKAMTTGSVPSFLDVILNIAESDTSSTLAYQDTWLAQIKAQGGQLVMYGDDTWIKLFPGVFDRCDGTTSFFVSDFTEVDHNVTRHVPRELSERDWSAFIMHFLGLDHIGHKAGPKSRHMMTKQREMDSIVALIYAAMEEQEHLQSTLFVLCGDHGMNDAGNHGGSSPGEISPALLFISPKFQTKTTPEDSPVEAFSDLQYYRTVEQVDITPTLAGLLGLPIPLNSLGVFIPEFLMMWDNDAHRIDILLRNAKQMLSAMKGTFPDLDVEAITPPHGCDKHVLRSAQDVMSSTASKYNTTRLYLGLFVAALAVLLSFFPAYGLGSKYSYAVTFLMLIIISYGGMMFASSYVEEEQQFWYWVVTAWTVYLHIKSLRPWHGSKDTRRWNQTGQKFAAEPDIARDFFPRHQNILWALIILTYFDTCMHLCLNSHSSNIWRSAAILTTIAAFFFKLVFVASDSPELLYESLLSPIQKSLEEMPLVPPARLSKAVNIPIFLMFRLQAIILDFLKMSAIEVTLTSLLSQNMTFFAFGGSNAISSVDLSNAYNGIGSYSVVLVGVLTFISNWAGPIWWASAARLLYSNPTFAERYGQRTLLTFHAATSLMSVMAACTMLRTHLFIWTVFSPKYLYTLAWTILNHMFINLPATANVSQVLNWQYAFHSVACR.

Residues Asn-186 and Asn-401 are each glycosylated (N-linked (GlcNAc...) asparagine). Helical transmembrane passes span 407-427 (LGLF…YGLG) and 434-454 (VTFL…SSYV). A glycan (N-linked (GlcNAc...) asparagine) is linked at Asn-490. Helical transmembrane passes span 513–533 (ILWA…CLNS), 538–558 (IWRS…LVFV), and 595–615 (IPIF…KMSA). N-linked (GlcNAc...) asparagine glycosylation is present at Asn-627. Transmembrane regions (helical) follow at residues 655 to 675 (SVVL…IWWA), 695 to 715 (TLLT…CTML), and 733 to 755 (LAWT…SQVL).

The protein belongs to the PIGG/PIGN/PIGO family. PIGG subfamily.

It is found in the endoplasmic reticulum membrane. It functions in the pathway glycolipid biosynthesis; glycosylphosphatidylinositol-anchor biosynthesis. Ethanolamine phosphate transferase involved in glycosylphosphatidylinositol-anchor biosynthesis. Transfers ethanolamine phosphate to the GPI second mannose. The protein is GPI ethanolamine phosphate transferase 2 (las21) of Aspergillus fumigatus (strain ATCC MYA-4609 / CBS 101355 / FGSC A1100 / Af293) (Neosartorya fumigata).